A 140-amino-acid chain; its full sequence is 3-hydroxyacyl-[acyl-carrier-protein] dehydratase FabZ (140 aa).

The active site involves H48.

It belongs to the thioester dehydratase family. FabZ subfamily.

It is found in the cytoplasm. It carries out the reaction a (3R)-hydroxyacyl-[ACP] = a (2E)-enoyl-[ACP] + H2O. Involved in unsaturated fatty acids biosynthesis. Catalyzes the dehydration of short chain beta-hydroxyacyl-ACPs and long chain saturated and unsaturated beta-hydroxyacyl-ACPs. The chain is 3-hydroxyacyl-[acyl-carrier-protein] dehydratase FabZ from Caldicellulosiruptor saccharolyticus (strain ATCC 43494 / DSM 8903 / Tp8T 6331).